The chain runs to 343 residues: S-adenosylmethionine:tRNA ribosyltransferase-isomerase (343 aa).

Belongs to the QueA family. As to quaternary structure, monomer.

The protein localises to the cytoplasm. The enzyme catalyses 7-aminomethyl-7-carbaguanosine(34) in tRNA + S-adenosyl-L-methionine = epoxyqueuosine(34) in tRNA + adenine + L-methionine + 2 H(+). It participates in tRNA modification; tRNA-queuosine biosynthesis. Transfers and isomerizes the ribose moiety from AdoMet to the 7-aminomethyl group of 7-deazaguanine (preQ1-tRNA) to give epoxyqueuosine (oQ-tRNA). In Geobacter sulfurreducens (strain ATCC 51573 / DSM 12127 / PCA), this protein is S-adenosylmethionine:tRNA ribosyltransferase-isomerase.